The primary structure comprises 92 residues: Small ribosomal subunit protein bS16 (92 aa).

This sequence belongs to the bacterial ribosomal protein bS16 family.

The polypeptide is Small ribosomal subunit protein bS16 (Desulforudis audaxviator (strain MP104C)).